Here is a 115-residue protein sequence, read N- to C-terminus: MIVGYLLVVLVSLLTCGGQLCQKQAALSWQLPPEVRRGVTLRWLALAVLLLGLGMAVWLNVLQRLPLSLAYPTLSLNFVLVTLAARWLFNEPTTARHWYGVASIMLGILLMSINP.

4 consecutive transmembrane segments (helical) span residues M1–C21, W43–Q63, L65–A85, and T93–I113. Residues L44 to I113 enclose the EamA domain.

The protein belongs to the ArnE family. In terms of assembly, heterodimer of ArnE and ArnF.

It is found in the cell inner membrane. Its pathway is bacterial outer membrane biogenesis; lipopolysaccharide biosynthesis. In terms of biological role, translocates 4-amino-4-deoxy-L-arabinose-phosphoundecaprenol (alpha-L-Ara4N-phosphoundecaprenol) from the cytoplasmic to the periplasmic side of the inner membrane. In Serratia proteamaculans (strain 568), this protein is Probable 4-amino-4-deoxy-L-arabinose-phosphoundecaprenol flippase subunit ArnE.